Reading from the N-terminus, the 537-residue chain is uncharacterized protein (537 aa).

This is an uncharacterized protein from Mycobacterium bovis (strain ATCC BAA-935 / AF2122/97).